Reading from the N-terminus, the 386-residue chain is Methionine aminopeptidase 1 (386 aa).

Position 2 is an N-acetylalanine (alanine 2). Residues 6–59 (TRVCETDGCSSEAKLQCPTCIKLGIQGSYFCSQECFKGSWATHKLLHKKAKDEK) form a C6H2-type zinc finger. Residues cysteine 9, cysteine 14, cysteine 22, cysteine 25, cysteine 36, cysteine 40, histidine 48, and histidine 52 each coordinate Zn(2+). Histidine 203 serves as a coordination point for a protein. Zn(2+) is bound by residues aspartate 220, aspartate 231, and histidine 294. Histidine 301 contributes to the a protein binding site. Zn(2+) is bound by residues glutamate 327 and glutamate 358.

Belongs to the peptidase M24A family. Methionine aminopeptidase type 1 subfamily. Associates with the 60S ribosomal subunit of the 80S translational complex. Zn(2+) is required as a cofactor. It depends on Co(2+) as a cofactor. Mn(2+) serves as cofactor. Requires Fe(2+) as cofactor.

It is found in the cytoplasm. It carries out the reaction Release of N-terminal amino acids, preferentially methionine, from peptides and arylamides.. In terms of biological role, cotranslationally removes the N-terminal methionine from nascent proteins. The N-terminal methionine is often cleaved when the second residue in the primary sequence is small and uncharged (Met-Ala-, Cys, Gly, Pro, Ser, Thr, or Val). Required for normal progression through the cell cycle. This is Methionine aminopeptidase 1 (METAP1) from Homo sapiens (Human).